We begin with the raw amino-acid sequence, 105 residues long: Heat shock protein HspQ (105 aa).

The tract at residues 74–105 (SSELQDERPEQPSMDELAQTIRKQRQAPRLRN) is disordered. Over residues 95-105 (RKQRQAPRLRN) the composition is skewed to basic residues.

This sequence belongs to the HspQ family.

It is found in the cytoplasm. Involved in the degradation of certain denaturated proteins, including DnaA, during heat shock stress. This is Heat shock protein HspQ from Shigella dysenteriae serotype 1 (strain Sd197).